Here is a 337-residue protein sequence, read N- to C-terminus: Glyceraldehyde-3-phosphate dehydrogenase 1 (337 aa).

Residues 12-13 (RI), aspartate 34, and arginine 79 contribute to the NAD(+) site. Residues 150–152 (SCT), threonine 181, 210–211 (TG), and arginine 233 each bind D-glyceraldehyde 3-phosphate. Cysteine 151 (nucleophile) is an active-site residue. Asparagine 315 contacts NAD(+).

The protein belongs to the glyceraldehyde-3-phosphate dehydrogenase family. As to quaternary structure, homotetramer.

It is found in the cytoplasm. It carries out the reaction D-glyceraldehyde 3-phosphate + phosphate + NAD(+) = (2R)-3-phospho-glyceroyl phosphate + NADH + H(+). It functions in the pathway carbohydrate degradation; glycolysis; pyruvate from D-glyceraldehyde 3-phosphate: step 1/5. The sequence is that of Glyceraldehyde-3-phosphate dehydrogenase 1 (GPD1) from Mucor circinelloides f. lusitanicus (Mucor racemosus var. lusitanicus).